We begin with the raw amino-acid sequence, 414 residues long: ATP-dependent Clp protease ATP-binding subunit ClpX (414 aa).

A ClpX-type ZB domain is found at 1 to 51; that stretch reads MADSKTKKKCSFCGRSENEVGFLITGMNGYICDSCATQAYEITQEALGEGR. Cys10, Cys13, Cys32, and Cys35 together coordinate Zn(2+). An ATP-binding site is contributed by 120-127; the sequence is STGTGKTL.

The protein belongs to the ClpX chaperone family. Component of the ClpX-ClpP complex. Forms a hexameric ring that, in the presence of ATP, binds to fourteen ClpP subunits assembled into a disk-like structure with a central cavity, resembling the structure of eukaryotic proteasomes.

Its function is as follows. ATP-dependent specificity component of the Clp protease. It directs the protease to specific substrates. Can perform chaperone functions in the absence of ClpP. The chain is ATP-dependent Clp protease ATP-binding subunit ClpX from Bacteroides thetaiotaomicron (strain ATCC 29148 / DSM 2079 / JCM 5827 / CCUG 10774 / NCTC 10582 / VPI-5482 / E50).